The chain runs to 389 residues: Type II methyltransferase M2.BsuMI (389 aa).

Positions 1–299 (MKVVSLFSGI…ENLSQPKGSI (299 aa)) constitute an SAM-dependent MTase C5-type domain. Cys-69 is a catalytic residue.

This sequence belongs to the class I-like SAM-binding methyltransferase superfamily. C5-methyltransferase family. As to quaternary structure, monomer. May form a complex with YdiP, also seems to be active alone.

The catalysed reaction is a 2'-deoxycytidine in DNA + S-adenosyl-L-methionine = a 5-methyl-2'-deoxycytidine in DNA + S-adenosyl-L-homocysteine + H(+). Somewhat inhibited by MgCl(2) and spermidine, strongly inhibited by MnCl(2). Functionally, a methylase, recognizes the double-stranded sequence 5'-YTCGAR-3', methylates C-3 on both strands, and protects the DNA from cleavage by the BsuMI endonuclease. This is Type II methyltransferase M2.BsuMI (ydiP) from Bacillus subtilis (strain 168).